We begin with the raw amino-acid sequence, 587 residues long: Folylpolyglutamate synthase, mitochondrial (587 aa).

The N-terminal 42 residues, 1 to 42 (MSWARTHLRSALSLAAVSARGATTEGAARRWLSAWPAPQEPG), are a transit peptide targeting the mitochondrion. Position 106 to 109 (106 to 109 (GKGS)) interacts with ATP. Mg(2+) is bound by residues serine 130, glutamate 200, and histidine 228. Residues arginine 363 and aspartate 377 each coordinate ATP. Positions 484–508 (PDFLSSPSPEPGRPGSLQPALRPPH) are disordered. Serine 539 carries the post-translational modification Phosphoserine.

This sequence belongs to the folylpolyglutamate synthase family. In terms of assembly, monomer. The cofactor is a monovalent cation.

The protein localises to the mitochondrion inner membrane. It localises to the mitochondrion matrix. The protein resides in the cytoplasm. It carries out the reaction (6S)-5,6,7,8-tetrahydrofolyl-(gamma-L-Glu)(n) + L-glutamate + ATP = (6S)-5,6,7,8-tetrahydrofolyl-(gamma-L-Glu)(n+1) + ADP + phosphate + H(+). Its pathway is cofactor biosynthesis; tetrahydrofolylpolyglutamate biosynthesis. In terms of biological role, catalyzes conversion of folates to polyglutamate derivatives allowing concentration of folate compounds in the cell and the intracellular retention of these cofactors, which are important substrates for most of the folate-dependent enzymes that are involved in one-carbon transfer reactions involved in purine, pyrimidine and amino acid synthesis. The protein is Folylpolyglutamate synthase, mitochondrial (FPGS) of Cricetulus griseus (Chinese hamster).